A 165-amino-acid chain; its full sequence is Small ribosomal subunit protein bS16 (165 aa).

It belongs to the bacterial ribosomal protein bS16 family.

This chain is Small ribosomal subunit protein bS16, found in Azobacteroides pseudotrichonymphae genomovar. CFP2.